The primary structure comprises 141 residues: Large ribosomal subunit protein uL11 (141 aa).

The protein belongs to the universal ribosomal protein uL11 family. In terms of assembly, part of the ribosomal stalk of the 50S ribosomal subunit. Interacts with L10 and the large rRNA to form the base of the stalk. L10 forms an elongated spine to which L12 dimers bind in a sequential fashion forming a multimeric L10(L12)X complex. One or more lysine residues are methylated.

Functionally, forms part of the ribosomal stalk which helps the ribosome interact with GTP-bound translation factors. In Kosmotoga olearia (strain ATCC BAA-1733 / DSM 21960 / TBF 19.5.1), this protein is Large ribosomal subunit protein uL11.